A 251-amino-acid chain; its full sequence is Hydroxyacylglutathione hydrolase (251 aa).

Zn(2+)-binding residues include His53, His55, Asp57, His58, His110, Asp127, and His165.

The protein belongs to the metallo-beta-lactamase superfamily. Glyoxalase II family. Monomer. It depends on Zn(2+) as a cofactor.

The enzyme catalyses an S-(2-hydroxyacyl)glutathione + H2O = a 2-hydroxy carboxylate + glutathione + H(+). It functions in the pathway secondary metabolite metabolism; methylglyoxal degradation; (R)-lactate from methylglyoxal: step 2/2. In terms of biological role, thiolesterase that catalyzes the hydrolysis of S-D-lactoyl-glutathione to form glutathione and D-lactic acid. The protein is Hydroxyacylglutathione hydrolase of Klebsiella pneumoniae subsp. pneumoniae (strain ATCC 700721 / MGH 78578).